A 245-amino-acid chain; its full sequence is Orotidine 5'-phosphate decarboxylase (245 aa).

Substrate contacts are provided by residues Asp-22, Lys-44, 71-80 (DLKFHDIPNT), Thr-131, Arg-192, Gln-201, Gly-221, and Arg-222. Residue Lys-73 is the Proton donor of the active site.

This sequence belongs to the OMP decarboxylase family. Type 1 subfamily. In terms of assembly, homodimer.

The enzyme catalyses orotidine 5'-phosphate + H(+) = UMP + CO2. It functions in the pathway pyrimidine metabolism; UMP biosynthesis via de novo pathway; UMP from orotate: step 2/2. Its function is as follows. Catalyzes the decarboxylation of orotidine 5'-monophosphate (OMP) to uridine 5'-monophosphate (UMP). This chain is Orotidine 5'-phosphate decarboxylase, found in Salmonella typhi.